A 59-amino-acid polypeptide reads, in one-letter code: Large ribosomal subunit protein uL30 (59 aa).

Belongs to the universal ribosomal protein uL30 family. Part of the 50S ribosomal subunit.

This Bacillus licheniformis (strain ATCC 14580 / DSM 13 / JCM 2505 / CCUG 7422 / NBRC 12200 / NCIMB 9375 / NCTC 10341 / NRRL NRS-1264 / Gibson 46) protein is Large ribosomal subunit protein uL30.